The chain runs to 178 residues: Ribosome maturation factor RimM (178 aa).

Positions 101–178 constitute a PRC barrel domain; it reads DGEYYWYQLQ…EMQVDWDADF (78 aa).

This sequence belongs to the RimM family. As to quaternary structure, binds ribosomal protein uS19.

Its subcellular location is the cytoplasm. An accessory protein needed during the final step in the assembly of 30S ribosomal subunit, possibly for assembly of the head region. Essential for efficient processing of 16S rRNA. May be needed both before and after RbfA during the maturation of 16S rRNA. It has affinity for free ribosomal 30S subunits but not for 70S ribosomes. This chain is Ribosome maturation factor RimM, found in Stutzerimonas stutzeri (strain A1501) (Pseudomonas stutzeri).